Consider the following 388-residue polypeptide: Succinate--CoA ligase [ADP-forming] subunit beta (388 aa).

The ATP-grasp domain occupies 9–244 (KELFARRGLP…VTQEDAREAH (236 aa)). ATP is bound by residues lysine 46, 53-55 (GRG), glutamate 99, threonine 102, and glutamate 107. 2 residues coordinate Mg(2+): asparagine 199 and aspartate 213. Substrate is bound by residues asparagine 264 and 321-323 (GIV).

Belongs to the succinate/malate CoA ligase beta subunit family. As to quaternary structure, heterotetramer of two alpha and two beta subunits. Mg(2+) is required as a cofactor.

The enzyme catalyses succinate + ATP + CoA = succinyl-CoA + ADP + phosphate. It carries out the reaction GTP + succinate + CoA = succinyl-CoA + GDP + phosphate. It participates in carbohydrate metabolism; tricarboxylic acid cycle; succinate from succinyl-CoA (ligase route): step 1/1. Functionally, succinyl-CoA synthetase functions in the citric acid cycle (TCA), coupling the hydrolysis of succinyl-CoA to the synthesis of either ATP or GTP and thus represents the only step of substrate-level phosphorylation in the TCA. The beta subunit provides nucleotide specificity of the enzyme and binds the substrate succinate, while the binding sites for coenzyme A and phosphate are found in the alpha subunit. This is Succinate--CoA ligase [ADP-forming] subunit beta from Hamiltonella defensa subsp. Acyrthosiphon pisum (strain 5AT).